The primary structure comprises 330 residues: uncharacterized protein (330 aa).

An ABC transporter domain is found at L4–T242. G40–T47 contacts ATP. Residue D210–E330 coordinates a nucleoside 3',5'-cyclic phosphate.

The protein belongs to the ABC transporter superfamily.

This is an uncharacterized protein from Mycobacterium bovis (strain ATCC BAA-935 / AF2122/97).